A 440-amino-acid polypeptide reads, in one-letter code: Alpha-methylserine aldolase (440 aa).

The residue at position 255 (Lys-255) is an N6-(pyridoxal phosphate)lysine.

Belongs to the SHMT family. Alpha-methylserine aldolase subfamily. Homodimer. Pyridoxal 5'-phosphate serves as cofactor.

The enzyme catalyses 2-methyl-L-serine = formaldehyde + L-alanine. Its function is as follows. Catalyzes the reversible interconversion of alpha-methyl-L-serine to L-alanine and formaldehyde. This Variovorax paradoxus protein is Alpha-methylserine aldolase.